A 334-amino-acid polypeptide reads, in one-letter code: Protein-glutamate methylesterase/protein-glutamine glutaminase 1 (334 aa).

In terms of domain architecture, Response regulatory spans 2–120; that stretch reads NIGIVNDLPL…GAAGDTTKLL (119 aa). 4-aspartylphosphate is present on Asp53. The region spanning 145–334 is the CheB-type methylesterase domain; the sequence is RAGGGPLIAI…AGELAALARI (190 aa). Active-site residues include Ser157, His184, and Asp277.

The protein belongs to the CheB family. Post-translationally, phosphorylated by CheA. Phosphorylation of the N-terminal regulatory domain activates the methylesterase activity.

It localises to the cytoplasm. It catalyses the reaction [protein]-L-glutamate 5-O-methyl ester + H2O = L-glutamyl-[protein] + methanol + H(+). It carries out the reaction L-glutaminyl-[protein] + H2O = L-glutamyl-[protein] + NH4(+). Its function is as follows. Involved in chemotaxis. Part of a chemotaxis signal transduction system that modulates chemotaxis in response to various stimuli. Catalyzes the demethylation of specific methylglutamate residues introduced into the chemoreceptors (methyl-accepting chemotaxis proteins or MCP) by CheR. Also mediates the irreversible deamidation of specific glutamine residues to glutamic acid. In Burkholderia lata (strain ATCC 17760 / DSM 23089 / LMG 22485 / NCIMB 9086 / R18194 / 383), this protein is Protein-glutamate methylesterase/protein-glutamine glutaminase 1.